The sequence spans 234 residues: 2,3-bisphosphoglycerate-dependent phosphoglycerate mutase (234 aa).

Residues Arg-8–Asn-15, Thr-21–Gly-22, Arg-60, Glu-87–Tyr-90, Lys-98, Arg-114–Arg-115, and Gly-183–Asn-184 each bind substrate. Catalysis depends on His-9, which acts as the Tele-phosphohistidine intermediate. Glu-87 serves as the catalytic Proton donor/acceptor.

This sequence belongs to the phosphoglycerate mutase family. BPG-dependent PGAM subfamily. As to quaternary structure, homodimer.

The enzyme catalyses (2R)-2-phosphoglycerate = (2R)-3-phosphoglycerate. The protein operates within carbohydrate degradation; glycolysis; pyruvate from D-glyceraldehyde 3-phosphate: step 3/5. In terms of biological role, catalyzes the interconversion of 2-phosphoglycerate and 3-phosphoglycerate. This chain is 2,3-bisphosphoglycerate-dependent phosphoglycerate mutase, found in Geobacter sp. (strain M21).